The primary structure comprises 310 residues: Cytosolic Fe-S cluster assembly factor Nubp1 homolog (310 aa).

Positions 8, 22, 25, and 31 each coordinate [4Fe-4S] cluster. Residue G62–S69 coordinates ATP. 2 residues coordinate [4Fe-4S] cluster: C239 and C242.

It belongs to the Mrp/NBP35 ATP-binding proteins family. NUBP1/NBP35 subfamily. Heterotetramer of 2 Nubp1 and 2 Nubp2 chains. Requires [4Fe-4S] cluster as cofactor.

Its subcellular location is the cytoplasm. In terms of biological role, component of the cytosolic iron-sulfur (Fe/S) protein assembly (CIA) machinery. Required for maturation of extramitochondrial Fe-S proteins. The Nubp1-Nubp2 heterotetramer forms a Fe-S scaffold complex, mediating the de novo assembly of an Fe-S cluster and its transfer to target apoproteins. The polypeptide is Cytosolic Fe-S cluster assembly factor Nubp1 homolog (Drosophila ananassae (Fruit fly)).